Reading from the N-terminus, the 476-residue chain is MSKKLGNNSKKIAFVHPDLGIGGAERLVVDAAVGLQELENEVTIYTSHCDKKHCFEEVSSNLLDVEVYGDFFPTNVLKRFHILFAIIRQFYLVLALIFTGKIKQYDYFIVDQLSFCIPLLCCFSRPECKILFYCHFPDQLLALKGGFLKRFYRMPFDLIEEWTTGISDQIVVNSKFTKGIFHKTFKGLKNIEPGVIYPCVDLNSATDTEEDKLMDEEVNEFFKGGKFFLSVNRFERKKNIGLAIQSFAKFKAQLPKNVSEDNRIKPRLVVAGGFDPRVLENVEYLQELNGLSESLNLKCFTIRGKLLIIPPATDILFLPSIKSSLKKSLIKNAELLLYTPSFEHFGIVPVESMLFKTPVLSANNGGPLESIVHFTSDNIATATGYSQEPNDELWSKTMHTFYTELDEATKLKLGENGLTRVHELFSRHQMSEAFMQNLIQSNSKDEEKGILYGILKMWRIELLFVLISYYLVRLYK.

Residue Asn-7 is glycosylated (N-linked (GlcNAc...) asparagine). Residues 80-100 (FHILFAIIRQFYLVLALIFTG) form a helical membrane-spanning segment. Asn-257 carries an N-linked (GlcNAc...) asparagine glycan. The chain crosses the membrane as a helical span at residues 449–469 (GILYGILKMWRIELLFVLISY).

The protein belongs to the glycosyltransferase group 1 family.

The protein resides in the endoplasmic reticulum membrane. The enzyme catalyses a beta-D-Man-(1-&gt;4)-beta-D-GlcNAc-(1-&gt;4)-alpha-D-GlcNAc-diphospho-di-trans,poly-cis-dolichol + GDP-alpha-D-mannose = an alpha-D-Man-(1-&gt;3)-beta-D-Man-(1-&gt;4)-beta-D-GlcNAc-(1-&gt;4)-alpha-D-GlcNAc-diphospho-di-trans,poly-cis-dolichol + GDP + H(+). It carries out the reaction an alpha-D-Man-(1-&gt;3)-beta-D-Man-(1-&gt;4)-beta-D-GlcNAc-(1-&gt;4)-alpha-D-GlcNAc-diphospho-di-trans,poly-cis-dolichol + GDP-alpha-D-mannose = an alpha-D-Man-(1-&gt;3)-[alpha-D-Man-(1-&gt;6)]-beta-D-Man-(1-&gt;4)-beta-D-GlcNAc-(1-&gt;4)-alpha-D-GlcNAc-diphospho-di-trans,poly-cis-dolichol + GDP + H(+). It participates in protein modification; protein glycosylation. Functionally, mannosylates Man(2)GlcNAc(2)-dolichol diphosphate and Man(1)GlcNAc(2)-dolichol diphosphate to form Man(3)GlcNAc(2)-dolichol diphosphate. This chain is Alpha-1,3/1,6-mannosyltransferase ALG2 (ALG2), found in Debaryomyces hansenii (strain ATCC 36239 / CBS 767 / BCRC 21394 / JCM 1990 / NBRC 0083 / IGC 2968) (Yeast).